The chain runs to 851 residues: Phosphatidylinositol 4-kinase pik1 (851 aa).

The region spanning 1-123 (MPSSNSGNEL…KICKRLYNRI (123 aa)) is the PIK helical domain. Residues serine 202, serine 219, serine 222, and serine 235 each carry the phosphoserine modification. Position 236 is a phosphotyrosine (tyrosine 236). The tract at residues 384–404 (LQDSTDNDISESESEGGDLSM) is disordered. The segment covering 388–399 (TDNDISESESEG) has biased composition (acidic residues). Residues 558–836 (YAKKERIRKS…LIQKANCSVW (279 aa)) enclose the PI3K/PI4K catalytic domain. Residues 564 to 570 (IRKSSPY) form a G-loop region. The tract at residues 706 to 714 (QLKDRHNGN) is catalytic loop. The activation loop stretch occupies residues 725-749 (HIDFGFLLTNTPGNVGFESAPFKLT).

It belongs to the PI3/PI4-kinase family. Interacts with cdc4 and cam2.

It is found in the golgi apparatus. The protein localises to the nucleus. It catalyses the reaction a 1,2-diacyl-sn-glycero-3-phospho-(1D-myo-inositol) + ATP = a 1,2-diacyl-sn-glycero-3-phospho-(1D-myo-inositol 4-phosphate) + ADP + H(+). In terms of biological role, acts on phosphatidylinositol (PI) in the first committed step in the production of the second messenger inositol 1,4,5,-trisphosphate. PIK1 is part of a nuclear phosphoinositide cycle and could control cytokinesis through the actin cytoskeleton. The sequence is that of Phosphatidylinositol 4-kinase pik1 (pik1) from Schizosaccharomyces pombe (strain 972 / ATCC 24843) (Fission yeast).